Here is a 500-residue protein sequence, read N- to C-terminus: Flt3-interacting zinc finger protein 1 (500 aa).

Residue Met-1 is modified to N-acetylmethionine. A disordered region spans residues Met-1 to Ala-24. Positions Val-9 to Ala-19 are enriched in pro residues. 6 C2H2-type zinc fingers span residues Phe-29–His-51, His-57–His-79, Tyr-85–His-107, Tyr-113–His-136, Phe-204–His-226, and Phe-232–His-254. Disordered regions lie at residues Asp-255–Val-284 and Lys-306–Glu-328. Residues Leu-256–Trp-267 show a composition bias toward polar residues. 5 C2H2-type zinc fingers span residues Tyr-336–His-357, Tyr-363–His-386, Phe-418–His-440, Phe-446–His-468, and Phe-474–His-496. The interval Arg-383–Lys-415 is disordered.

As to quaternary structure, interacts with FLT3 cytoplasmic catalytic domain, following receptor stimulation, in a kinase-independent manner. Does not interact with other structurally related receptor tyrosine kinases, including KIT, CSF1R and PDGFR. Interacts with NRL. As to expression, widely expressed. In the retina, highest expression in the ganglion cell layer.

Its subcellular location is the cytoplasm. It is found in the nucleus. In terms of biological role, may be a transcriptional repressor of NRL function in photoreceptors. Does not repress CRX-mediated transactivation. In Mus musculus (Mouse), this protein is Flt3-interacting zinc finger protein 1 (Fiz1).